The primary structure comprises 477 residues: Fibrinogen beta chain (477 aa).

The tract at residues 1–76 (EDLSLVGQPE…ASPRPQEAQK (76 aa)) is disordered. Tyr13 is modified (sulfotyrosine). A glycan (N-linked (GlcNAc...) asparagine) is linked at Asn27. The segment covering 44–55 (RVRRPPLRHRRL) has biased composition (basic residues). 3 disulfide bridges follow: Cys220/Cys304, Cys230/Cys259, and Cys412/Cys425. A Fibrinogen C-terminal domain is found at 221–476 (RVPVVSGMHC…QMAMKLRPKW (256 aa)).

Heterohexamer; disulfide linked. Contains 2 sets of 3 non-identical chains (alpha, beta and gamma). The 2 heterotrimers are in head to head conformation with the N-termini in a small central domain. In terms of processing, conversion of fibrinogen to fibrin is triggered by thrombin, which cleaves fibrinopeptides A and B from alpha and beta chains, and thus exposes the N-terminal polymerization sites responsible for the formation of the soft clot. The soft clot is converted into the hard clot by factor XIIIA which catalyzes the epsilon-(gamma-glutamyl)lysine cross-linking between gamma chains (stronger) and between alpha chains (weaker) of different monomers.

It is found in the secreted. In terms of biological role, fibrinogen has a double function: yielding monomers that polymerize into fibrin and acting as a cofactor in platelet aggregation. The chain is Fibrinogen beta chain from Petromyzon marinus (Sea lamprey).